Reading from the N-terminus, the 733-residue chain is Hypermethylated in cancer 1 protein (733 aa).

In terms of domain architecture, BTB spans 47-110 (CDVIIVVQNA…IYTGRLTDSV (64 aa)). Residues 154–315 (KYCHLRGGGS…PFRGSGGSPG (162 aa)) are mediates HDAC-dependent transcriptional repression. Arginine 159 carries the omega-N-methylarginine modification. The disordered stretch occupies residues 189-209 (YSSPAGPPPPPAAEPPSGPDA). Pro residues predominate over residues 193–206 (AGPPPPPAAEPPSG). Residue serine 237 is modified to Phosphoserine. The segment at 241-247 (GLDLSKK) is interaction with CTBP1. The interval 241-421 (GLDLSKKSPP…PGGHLEGYPC (181 aa)) is disordered. At serine 248 the chain carries Phosphoserine. At lysine 333 the chain carries N6-acetyllysine; alternate. A Glycyl lysine isopeptide (Lys-Gly) (interchain with G-Cter in SUMO); alternate cross-link involves residue lysine 333. Residues 344-361 (ELVRDRGSPGERLEERGG) are compositionally biased toward basic and acidic residues. Phosphoserine is present on serine 366. Residues 368–380 (GGPPLGLVPPPRY) show a composition bias toward pro residues. 5 consecutive C2H2-type zinc fingers follow at residues 437 to 464 (YVCI…EEEE), 507 to 534 (YRCA…LTRP), 535 to 562 (YPCT…GLKP), 563 to 590 (FACD…GEKP), and 591 to 618 (YECQ…VGGA). Position 704 is a phosphoserine (serine 704).

The protein belongs to the krueppel C2H2-type zinc-finger protein family. Hic subfamily. Self-associates. Interacts with HIC2. Interacts with CTBP1 and CTBP2. Interacts with TCF7L2 and ARID1A. Interacts with MTA1 and MBD3; indicative for an association with the NuRD complex. Interacts with SIRT1. Post-translationally, acetylated on several residues, including Lys-333. Lys-333 is deacetylated by SIRT1. In terms of processing, sumoylated on Lys-333 by a PIAS family member, which enhances interaction with MTA1, positively regulates transcriptional repression activity and is enhanced by HDAC4. As to expression, ubiquitously expressed with highest levels in heart and lung.

It localises to the nucleus. In terms of biological role, transcriptional repressor. Recognizes and binds to the consensus sequence '5-[CG]NG[CG]GGGCA[CA]CC-3'. May act as a tumor suppressor. Involved in development of head, face, limbs and ventral body wall. Involved in down-regulation of SIRT1 and thereby is involved in regulation of p53/TP53-dependent apoptotic DNA-damage responses. The specific target gene promoter association seems to be depend on corepressors, such as CTBP1 or CTBP2 and MTA1. In cooperation with MTA1 (indicative for an association with the NuRD complex) represses transcription from CCND1/cyclin-D1 and CDKN1C/p57Kip2 specifically in quiescent cells. Involved in regulation of the Wnt signaling pathway probably by association with TCF7L2 and preventing TCF7L2 and CTNNB1 association with promoters of TCF-responsive genes. Seems to repress transcription from E2F1 and ATOH1 which involves ARID1A, indicative for the participation of a distinct SWI/SNF-type chromatin-remodeling complex. Probably represses transcription from ACKR3, FGFBP1 and EFNA1. The sequence is that of Hypermethylated in cancer 1 protein (Hic1) from Mus musculus (Mouse).